A 973-amino-acid chain; its full sequence is Ras-related protein Rab-44 (973 aa).

Basic residues predominate over residues Met-1–Gln-21. A disordered region spans residues Met-1–Ser-42. The 35-residue stretch at Gly-77–Ser-111 folds into the EF-hand domain. The segment at Ser-112–Glu-140 is disordered. Over residues Ser-123 to Leu-135 the composition is skewed to polar residues. A coiled-coil region spans residues Leu-219 to Glu-310. 4 disordered regions span residues Arg-319 to Asn-368, Phe-421 to Leu-481, Gly-493 to Val-708, and Glu-724 to Gln-779. Positions Asp-428 to Pro-440 are enriched in pro residues. The span at Lys-445–Asp-457 shows a compositional bias: basic and acidic residues. Over residues Gly-513–Ser-524 the composition is skewed to low complexity. 3 stretches are compositionally biased toward basic and acidic residues: residues Ser-548–Lys-559, His-598–Gly-608, and Ser-654–Ser-663. The span at Glu-665 to Pro-680 shows a compositional bias: polar residues. Residues Ala-750–Arg-766 show a composition bias toward basic and acidic residues. GTP is bound by residues Gly-792 to Thr-799, Asp-840 to Gln-844, and Asn-898 to Asp-901. Residues Cys-971 and Cys-972 are each lipidated (S-geranylgeranyl cysteine).

It belongs to the small GTPase superfamily. Rab family.

The protein resides in the cell membrane. This Mus musculus (Mouse) protein is Ras-related protein Rab-44 (Rab44).